The following is a 159-amino-acid chain: Phosphopantetheine adenylyltransferase (159 aa).

Threonine 10 contacts substrate. ATP is bound by residues 10-11 (TF) and histidine 18. Substrate is bound by residues lysine 42, methionine 74, and arginine 88. ATP contacts are provided by residues 89-91 (GLR), glutamate 99, and 124-130 (WSFISSS).

Belongs to the bacterial CoaD family. In terms of assembly, homohexamer. The cofactor is Mg(2+).

It localises to the cytoplasm. The enzyme catalyses (R)-4'-phosphopantetheine + ATP + H(+) = 3'-dephospho-CoA + diphosphate. It functions in the pathway cofactor biosynthesis; coenzyme A biosynthesis; CoA from (R)-pantothenate: step 4/5. In terms of biological role, reversibly transfers an adenylyl group from ATP to 4'-phosphopantetheine, yielding dephospho-CoA (dPCoA) and pyrophosphate. In Salmonella arizonae (strain ATCC BAA-731 / CDC346-86 / RSK2980), this protein is Phosphopantetheine adenylyltransferase.